A 110-amino-acid chain; its full sequence is Thiosulfate sulfurtransferase GlpE (110 aa).

The Rhodanese domain maps to 17–105; sequence HQGKAVLVDI…WHRHFPAEVE (89 aa). Cys-65 (cysteine persulfide intermediate) is an active-site residue.

Belongs to the GlpE family.

The protein resides in the cytoplasm. The catalysed reaction is thiosulfate + hydrogen cyanide = thiocyanate + sulfite + 2 H(+). The enzyme catalyses thiosulfate + [thioredoxin]-dithiol = [thioredoxin]-disulfide + hydrogen sulfide + sulfite + 2 H(+). Functionally, transferase that catalyzes the transfer of sulfur from thiosulfate to thiophilic acceptors such as cyanide or dithiols. May function in a CysM-independent thiosulfate assimilation pathway by catalyzing the conversion of thiosulfate to sulfite, which can then be used for L-cysteine biosynthesis. This Enterobacter sp. (strain 638) protein is Thiosulfate sulfurtransferase GlpE.